The chain runs to 302 residues: 1,2-dihydroxynaphthalene dioxygenase (302 aa).

VOC domains are found at residues 9 to 124 and 149 to 270; these read ELGY…IFWG and GLGH…PGWR. Residue His152 coordinates Fe cation. Substrate contacts are provided by residues His152, 199–200, His215, and Tyr256; that span reads DH. His215 contributes to the Fe cation binding site. Residue Glu266 coordinates Fe cation.

Belongs to the extradiol ring-cleavage dioxygenase family. The cofactor is Fe(2+).

It carries out the reaction naphthalene-1,2-diol + O2 = 2-hydroxychromene-2-carboxylate + H(+). It participates in aromatic compound metabolism; naphthalene degradation. Involved in the naphthalene catabolic pathway. Catalyzes the meta-cleavage of 1,2-dihydroxynaphthalene (1,2-DHN) to yield 2-hydroxychromene-2-carboxylic acid. The chain is 1,2-dihydroxynaphthalene dioxygenase (nahC) from Pseudomonas putida (Arthrobacter siderocapsulatus).